The sequence spans 233 residues: Methyltransferase srdJ (233 aa).

The tract at residues 1–32 is disordered; sequence MFQVQTAGTRTGTSSPDTTTSEAGLGSTPPMP. Residues 9 to 21 show a composition bias toward low complexity; the sequence is TRTGTSSPDTTTS. Residues W40, W52, and G81 each contribute to the S-adenosyl-L-methionine site. The short motif at 140-146 is the Required for methyltransferase activity element; it reads EISSQKY.

It belongs to the methyltransferase superfamily.

Functionally, methyltransferase; part of the gene cluster that mediates the biosynthesis of sordarial, a salicylic aldehyde structurally related to the phytotoxin pyriculol. The most interesting aspect of this pathway is formation of an aromatic product from the highly reducing polyketide synthase srdA. SrdA synthesizes a reduced polyketide chain from one molecule of acetyl-CoA and five molecules of malonyl-CoA. The polyketide chain is then reductively released as an aldehyde. The oxidoreductases srdC, srdD and srdE then oxidize one of the hydroxy groups to facilitate the intramolecular aldol condensation, followed by dehydration to yield a salicylic aldehyde. This aldehyde can undergo facile reduction by endogenous reductases to yield the alcohol 1-hydroxy-2-hydroxymethyl-3-pent-1,3-dienylbenzene. The flavin-dependent srdI counteract against the propensity of the aldehydes to be reduced under physiological conditions and is responsible for reoxidizing 1-hydroxy-2-hydroxymethyl-3-pent-1,3-dienylbenzene back to the salicylic aldehyde. This salicylic aldehyde is then selectively epoxidized by the cupin-domain-containing oxidoreductase srdB to yield the epoxide, which can be hydrolyzed stereoselectively by the hydrolase srdG to give the final product sordarial. The protein is Methyltransferase srdJ of Neurospora crassa (strain ATCC 24698 / 74-OR23-1A / CBS 708.71 / DSM 1257 / FGSC 987).